The primary structure comprises 66 residues: MRRLYRHLASFFLLPSCPGNTIQSITSYPANALLRSFRHVSTETPVRNRVHNRDSQSCPFFPLMDD.

An N-terminal signal peptide occupies residues 1-19 (MRRLYRHLASFFLLPSCPG).

This is an uncharacterized protein from Saccharomyces cerevisiae (strain ATCC 204508 / S288c) (Baker's yeast).